The chain runs to 272 residues: MKLTKAQYDEIAQFLGHVQPTRQSLRKLKEKFPSQSQSTLLSIFSQEYQKQIKRTHAKHHTAEAVETYYQRYLNGVMKNAAAPVLLELANEMDFAPSLMARIVLERFLQEQEQAIPSKTLINSMLRDPSQIPDGVLANQIYQCTVNDCCYGPLVDCIKHFINNRSCSLCVAEDQLRAKGYDKTPDFILEVPVAVEGHIIHWIESKASFGDESSHQAYLQDQFWSYWNRFGPGLVIYWYGFIEELDCHRERGILLKDCFPTDIVTLRHSMAQR.

The protein localises to the nucleus. The protein resides in the cytoplasm. Functionally, may play a role in erythroid cell differentiation. The sequence is that of CDAN1-interacting nuclease 1 (CDIN1) from Gallus gallus (Chicken).